Here is an 807-residue protein sequence, read N- to C-terminus: uncharacterized protein (807 aa).

The signal sequence occupies residues 1 to 18 (MNTVLFVILLAAIGSNHG). Topologically, residues 19-704 (LIDERLTVNR…GLFTDIFGGE (686 aa)) are extracellular. Over residues 133–142 (TTTTAAPQTG) the composition is skewed to polar residues. The disordered stretch occupies residues 133 to 171 (TTTTAAPQTGNRRRRRAAGDEPNTDDNTPPNLEIPDWLD). N-linked (GlcNAc...) asparagine; by host glycans are attached at residues Asn-277 and Asn-660. Residues 705–725 (VWAVIAAIFSPVFLTAFALII) form a helical membrane-spanning segment. Residues 726–807 (SLINFIPAVR…GERQVISRTN (82 aa)) lie on the Cytoplasmic side of the membrane.

It is found in the host membrane. This is an uncharacterized protein from Magallana gigas (Pacific oyster).